Consider the following 127-residue polypeptide: UPF0102 protein Mmwyl1_2395 (127 aa).

Belongs to the UPF0102 family.

The protein is UPF0102 protein Mmwyl1_2395 of Marinomonas sp. (strain MWYL1).